The chain runs to 253 residues: Zinc import ATP-binding protein ZnuC (253 aa).

Positions 6-227 constitute an ABC transporter domain; that stretch reads VTLNKISVTF…FGNRGAEQLA (222 aa). An ATP-binding site is contributed by 38-45; that stretch reads GPNGAGKS.

This sequence belongs to the ABC transporter superfamily. Zinc importer (TC 3.A.1.15.5) family. In terms of assembly, the complex is composed of two ATP-binding proteins (ZnuC), two transmembrane proteins (ZnuB) and a solute-binding protein (ZnuA).

The protein localises to the cell inner membrane. The enzyme catalyses Zn(2+)(out) + ATP(in) + H2O(in) = Zn(2+)(in) + ADP(in) + phosphate(in) + H(+)(in). Its function is as follows. Part of the ABC transporter complex ZnuABC involved in zinc import. Responsible for energy coupling to the transport system. The sequence is that of Zinc import ATP-binding protein ZnuC from Yersinia pseudotuberculosis serotype I (strain IP32953).